We begin with the raw amino-acid sequence, 501 residues long: 7-alpha-hydroxycholest-4-en-3-one 12-alpha-hydroxylase (501 aa).

The helical transmembrane segment at 1-21 (MVLWGPVLGALLVVIAGYLCL) threads the bilayer. Ser326 bears the Phosphoserine mark. A heme-binding site is contributed by Cys440.

This sequence belongs to the cytochrome P450 family. It depends on heme as a cofactor. In terms of tissue distribution, liver.

It is found in the endoplasmic reticulum membrane. The protein localises to the microsome membrane. It carries out the reaction 7alpha-hydroxycholest-4-en-3-one + reduced [NADPH--hemoprotein reductase] + O2 = 7alpha,12alpha-dihydroxycholest-4-en-3-one + oxidized [NADPH--hemoprotein reductase] + H2O + H(+). It catalyses the reaction 5beta-cholestane-3alpha,7alpha-diol + reduced [NADPH--hemoprotein reductase] + O2 = 5beta-cholestane-3alpha,7alpha,12alpha-triol + oxidized [NADPH--hemoprotein reductase] + H2O + H(+). The enzyme catalyses chenodeoxycholate + reduced [NADPH--hemoprotein reductase] + O2 = cholate + oxidized [NADPH--hemoprotein reductase] + H2O + H(+). It participates in lipid metabolism; bile acid biosynthesis. Its function is as follows. A cytochrome P450 monooxygenase involved in primary bile acid biosynthesis. Catalyzes the 12alpha-hydroxylation of 7alpha-hydroxy-4-cholesten-3-one, an intermediate metabolite in cholic acid biosynthesis. Controls biliary balance of cholic acid and chenodeoxycholic acid, ultimately regulating the intestinal absorption of dietary lipids. Mechanistically, uses molecular oxygen inserting one oxygen atom into a substrate, and reducing the second into a water molecule, with two electrons provided by NADPH via cytochrome P450 reductase (CPR; NADPH--hemoprotein reductase). The chain is 7-alpha-hydroxycholest-4-en-3-one 12-alpha-hydroxylase from Homo sapiens (Human).